We begin with the raw amino-acid sequence, 481 residues long: Matrilin-3 (481 aa).

The first 27 residues, 1 to 27, serve as a signal peptide directing secretion; it reads MLLSAPLRHLPGLLLLLWPLLLLPSLA. Residues 78–253 form the VWFA domain; sequence DLVFIIDSSR…GVIEKLSARF (176 aa). Arginine 193 carries the omega-N-methylarginine modification. EGF-like domains follow at residues 259 to 300, 301 to 342, 343 to 384, and 385 to 426; these read ALDQ…KTCS, AIDK…RTCA, ALDK…KTCS, and VRNK…KTCS. Disulfide bonds link cysteine 263–cysteine 274, cysteine 270–cysteine 284, cysteine 286–cysteine 299, cysteine 305–cysteine 316, cysteine 312–cysteine 326, cysteine 328–cysteine 341, cysteine 347–cysteine 358, cysteine 354–cysteine 368, cysteine 370–cysteine 383, cysteine 389–cysteine 400, cysteine 396–cysteine 410, and cysteine 412–cysteine 425. N-linked (GlcNAc...) asparagine glycosylation occurs at asparagine 321. A Phosphoserine; by FAM20C modification is found at serine 436. Residues 451 to 475 are a coiled coil; it reads EKVSSHLQKLNTKLDNILKKLKVTE.

Can form homooligomers (monomers, dimers, trimers and tetramers) and heterooligomers with matrilin-1. Interacts with COMP. Component of a complex containing at least CRELD2, MANF, MATN3 and PDIA4. Strongly expressed in growing skeletal tissue such as epiphyseal growth plate or in bone undergoing growth and remodeling. In the bone, actively synthesized in osteoblasts and osteocytes. Expressed in cartilage of sternum, femur, vertebrae, trachea, articular and epiphyseal cartilage, cartilage of developing bones and bones.

Its subcellular location is the secreted. Its function is as follows. Major component of the extracellular matrix of cartilage and may play a role in the formation of extracellular filamentous networks. The sequence is that of Matrilin-3 (Matn3) from Mus musculus (Mouse).